Consider the following 354-residue polypeptide: Membrane progestin receptor beta (354 aa).

Topologically, residues 1–76 (MTTAILERLS…FSLFQKHNEV (76 aa)) are cytoplasmic. The helical transmembrane segment at 77-97 (VNVWTHLLAALAVLLRFWAFV) threads the bilayer. At 98–111 (EAGALQWASPHTLP) the chain is on the extracellular side. A helical transmembrane segment spans residues 112–132 (LLLFILSSITYLTCSLLAHLL). The Cytoplasmic portion of the chain corresponds to 133-173 (QSKSELSHYTFYFVDYVGVSVYQYGSALAHFFYSSDQAWYE). The chain crosses the membrane as a helical span at residues 174-194 (LFWIFFLPAAAFCGWLSCAGC). Residues 195–213 (CYAKYRYRRPYPVMRKICQ) lie on the Extracellular side of the membrane. A helical membrane pass occupies residues 214–234 (VVPAGLAFVLDISPVAHRVAL). Over 235-243 (CHLAGCQEQ) the chain is Cytoplasmic. A helical transmembrane segment spans residues 244–264 (AAWYHTLQILFFLVSAYFFSC). The Extracellular portion of the chain corresponds to 265-283 (PVPEKYFPGSCDIVGHGHQ). The chain crosses the membrane as a helical span at residues 284 to 304 (IFHAFLSVCTLSQLEAILLDY). Over 305–315 (QGRHEIFLQRH) the chain is Cytoplasmic. A helical transmembrane segment spans residues 316 to 336 (GPLSVYSACLSFFVLAACSAA). Residues 337-354 (TATLLRHKVKDRLIKKDS) lie on the Extracellular side of the membrane.

Belongs to the ADIPOR family. Expressed in brain and testis.

Its subcellular location is the cell membrane. Plasma membrane progesterone (P4) receptor coupled to G proteins. Seems to act through a G(i) mediated pathway. May be involved in oocyte maturation. Also binds dehydroepiandrosterone (DHEA), pregnanolone, pregnenolone and allopregnanolone. The chain is Membrane progestin receptor beta from Mus musculus (Mouse).